The chain runs to 202 residues: Ras-related protein RABD2c (202 aa).

Residues 15-23 (GDSGVGKSC), 33-40 (YLDSYIST), 63-67 (DTAGQ), 121-124 (NKCD), and 151-153 (SAK) each bind GTP. The Effector region signature appears at 37–45 (YISTIGVDF). The interval 174-202 (ASQPAGGSKPPTVQIRGQPVNQQSGCCSS) is disordered. The segment covering 192–202 (PVNQQSGCCSS) has biased composition (polar residues). Residues cysteine 199 and cysteine 200 are each lipidated (S-geranylgeranyl cysteine).

This sequence belongs to the small GTPase superfamily. Rab family.

It localises to the cell membrane. Its subcellular location is the golgi apparatus. It is found in the trans-Golgi network membrane. The protein resides in the golgi apparatus membrane. Protein transport. Regulator of membrane traffic from the Golgi apparatus towards the endoplasmic reticulum (ER). The protein is Ras-related protein RABD2c (RABD2C) of Arabidopsis thaliana (Mouse-ear cress).